We begin with the raw amino-acid sequence, 312 residues long: uncharacterized protein (312 aa).

This is an uncharacterized protein from Escherichia coli (strain K12).